A 944-amino-acid polypeptide reads, in one-letter code: MAGPQESSTSSGSRKSGSRAVGQFNIGSEIGKGSFAQVYLGWHKETKAAVAIKSVELERLNKKLRENLYSEIQILKTLRHPHIVALHDCIESTSHINLIMEYCELGDLSLFIKKREKLATHPATHDMARKYPSMPNSGLHEVVIRHFLKQLTSALEFLRSKNYVHRDVKPQNLLLLPSQPFRDQRSRPVMQASQDSLIPISGLASLPMLKLADFGFARVLPSTSLADTLCGSPLYMAPEILRYERYDAKADLWSVGTVLYEMSTGRPPFRARNHVELLRKIEAAEDVIKFPREVSITPELKALIRSLLKRSPVERLSFENFFTHQVVTSEIPGLVEDDIPKSLRQESRDPRSAFQSGSPSLSSRSPRQTGHQSPTEALVSRSPRDQQPRSPQVGSPGGSRYARRSNESQRTTGNSPREGGEGLGIRRPVAQHAMTAPVQQVAYDSVTGRNRASPPTSLLDQVRRNRALSNPPITEEERAAQDVALEREYVVVERRHVEVNALADELAANEKLGDASQRSGPITRRYTQQGAPTSTTGAISTPYSRNALATQPRHDRKSSYEKSLSASPGSASSAISKAIQDASLRLFGFKVPPLRASPKGPSPPLYQAFPTYPTPQAPVGLLGDGRNVQGTDEDGKAAQTIEELATRSDCVYGFAEVKYKQLVPLAPSADHILGGLEPEQLVNEEDGLTVEAIVALSEEALVLYVKSLTLLARAMDIASLWWSKKSRGDTGTGLSAAAAQTVVQRINAVVQWVRQRFNEVLEKSEIVRLKLTEAQKQLPDDHPSHPSNHGTESIASSAGSPTKQVYLTPGISAEKLMYDRALEMSRAAAIDEVTNENLSGCEISYITAIRMLEAVLDNDEGSGSETRRLSTGKEAEREAVKEVSGGELDSDEEAHVRKRRLAAVRKKQQMIAEANSKTNLVYQQAVRRRSGDMTPRSVPSHASS.

In terms of domain architecture, Protein kinase spans 24-327 (FNIGSEIGKG…FENFFTHQVV (304 aa)). Residues 30–38 (IGKGSFAQV) and K53 each bind ATP. D167 functions as the Proton acceptor in the catalytic mechanism. Residues 344–423 (RQESRDPRSA…NSPREGGEGL (80 aa)) are disordered. Residues 356-367 (SGSPSLSSRSPR) show a composition bias toward low complexity. An LIR motif is present at residues 428 to 431 (PVAQ). Disordered stretches follow at residues 443 to 475 (YDSVTGRNRASPPTSLLDQVRRNRALSNPPITE), 512 to 572 (LGDA…GSAS), 777 to 801 (QLPDDHPSHPSNHGTESIASSAGSP), 860 to 895 (EGSGSETRRLSTGKEAEREAVKEVSGGELDSDEEAH), and 925 to 944 (AVRRRSGDMTPRSVPSHASS). Polar residues-rich tracts occupy residues 447-459 (TGRNRASPPTSLL) and 516-549 (SQRSGPITRRYTQQGAPTSTTGAISTPYSRNALA). The segment covering 563–572 (SLSASPGSAS) has biased composition (low complexity). Over residues 785-801 (HPSNHGTESIASSAGSP) the composition is skewed to polar residues. Basic and acidic residues predominate over residues 865 to 881 (ETRRLSTGKEAEREAVK). The segment at 924–930 (QAVRRRS) is required for Cvt trafficking.

Belongs to the protein kinase superfamily. Ser/Thr protein kinase family. APG1/unc-51/ULK1 subfamily. As to quaternary structure, homodimer. Dimerization requires the presence of ATG13. Forms a ternary complex with ATG13 and ATG17.

The protein localises to the cytoplasm. It localises to the preautophagosomal structure membrane. It carries out the reaction L-seryl-[protein] + ATP = O-phospho-L-seryl-[protein] + ADP + H(+). The catalysed reaction is L-threonyl-[protein] + ATP = O-phospho-L-threonyl-[protein] + ADP + H(+). In terms of biological role, serine/threonine protein kinase involved in the cytoplasm to vacuole transport (Cvt) and found to be essential in autophagy, where it is required for the formation of autophagosomes. Involved in the clearance of protein aggregates which cannot be efficiently cleared by the proteasome. Required for selective autophagic degradation of the nucleus (nucleophagy) as well as for mitophagy which contributes to regulate mitochondrial quantity and quality by eliminating the mitochondria to a basal level to fulfill cellular energy requirements and preventing excess ROS production. Also involved in endoplasmic reticulum-specific autophagic process, in selective removal of ER-associated degradation (ERAD) substrates. Plays a key role in ATG9 and ATG23 cycling through the pre-autophagosomal structure and is necessary to promote ATG18 binding to ATG9 through phosphorylation of ATG9. Catalyzes phosphorylation of ATG4, decreasing the interaction between ATG4 and ATG8 and impairing deconjugation of PE-conjugated forms of ATG8. Autophagy is required for proper vegetative growth, asexual/sexual reproduction, and full virulence. Autophagy is particularly involved in the biosynthesis of deoxynivalenol (DON), an important virulence determinant. In Gibberella zeae (strain ATCC MYA-4620 / CBS 123657 / FGSC 9075 / NRRL 31084 / PH-1) (Wheat head blight fungus), this protein is Serine/threonine-protein kinase ATG1.